A 109-amino-acid polypeptide reads, in one-letter code: Phosphoribosyl-AMP cyclohydrolase (109 aa).

Residue D80 participates in Mg(2+) binding. C81 provides a ligand contact to Zn(2+). Mg(2+) contacts are provided by D82 and D84. Zn(2+)-binding residues include C97 and C104.

The protein belongs to the PRA-CH family. As to quaternary structure, homodimer. It depends on Mg(2+) as a cofactor. Zn(2+) is required as a cofactor.

The protein resides in the cytoplasm. It catalyses the reaction 1-(5-phospho-beta-D-ribosyl)-5'-AMP + H2O = 1-(5-phospho-beta-D-ribosyl)-5-[(5-phospho-beta-D-ribosylamino)methylideneamino]imidazole-4-carboxamide. It functions in the pathway amino-acid biosynthesis; L-histidine biosynthesis; L-histidine from 5-phospho-alpha-D-ribose 1-diphosphate: step 3/9. In terms of biological role, catalyzes the hydrolysis of the adenine ring of phosphoribosyl-AMP. This chain is Phosphoribosyl-AMP cyclohydrolase, found in Clostridium beijerinckii (strain ATCC 51743 / NCIMB 8052) (Clostridium acetobutylicum).